The chain runs to 1098 residues: Platelet-derived growth factor receptor beta (1098 aa).

The first 31 residues, 1–31 (MGLPGVIPALVLRGQLLLSVLWLLGPQTSRG), serve as a signal peptide directing secretion. Residues 32-531 (LVITPPGPEF…VVPHSLPFKV (500 aa)) lie on the Extracellular side of the membrane. Ig-like C2-type domains are found at residues 33 to 119 (VITP…YIFV), 128 to 209 (PMDS…YSLQ), 213 to 308 (INVS…INIS), 330 to 402 (HRSR…HEDD), and 415 to 523 (PVRV…VTVV). N-linked (GlcNAc...) asparagine glycosylation is found at asparagine 44, asparagine 88, and asparagine 102. A disulfide bond links cysteine 53 and cysteine 99. A disulfide bond links cysteine 148 and cysteine 189. The N-linked (GlcNAc...) asparagine glycan is linked to asparagine 214. Cysteine 234 and cysteine 290 are disulfide-bonded. Asparagine 291, asparagine 306, asparagine 353, asparagine 370, asparagine 444, asparagine 467, and asparagine 478 each carry an N-linked (GlcNAc...) asparagine glycan. Residues cysteine 435 and cysteine 507 are joined by a disulfide bond. Residues 532–552 (VVISAILALVVLTVISLIILI) traverse the membrane as a helical segment. Topologically, residues 553 to 1098 (MLWQKKPRYE…PLAEAEDSFL (546 aa)) are cytoplasmic. Phosphotyrosine; by autocatalysis is present on residues tyrosine 561, tyrosine 578, and tyrosine 580. The Protein kinase domain occupies 599-961 (LVLGRTLGSG…QLVLLLERLL (363 aa)). Residues 605-613 (LGSGAFGQV) and lysine 633 each bind ATP. Tyrosine 685 is subject to Phosphotyrosine; by ABL1 and ABL2. 7 positions are modified to phosphotyrosine; by autocatalysis: tyrosine 715, tyrosine 739, tyrosine 750, tyrosine 762, tyrosine 770, tyrosine 774, and tyrosine 777. Aspartate 825 serves as the catalytic Proton acceptor. Tyrosine 856 is subject to Phosphotyrosine; by autocatalysis. Residues tyrosine 933 and tyrosine 969 each carry the phosphotyrosine; by ABL1 and ABL2 modification. 2 positions are modified to phosphotyrosine; by autocatalysis: tyrosine 1008 and tyrosine 1020. The segment at 1016-1098 (SDNDYIIPLP…PLAEAEDSFL (83 aa)) is disordered. Over residues 1042 to 1059 (SLASSTLNEVNTSSTISC) the composition is skewed to polar residues. Over residues 1062 to 1082 (PLELQEEPQQAEPEAQLEQPQ) the composition is skewed to low complexity.

The protein belongs to the protein kinase superfamily. Tyr protein kinase family. CSF-1/PDGF receptor subfamily. Interacts with homodimeric PDGFB and PDGFD, and with heterodimers formed by PDGFA and PDGFB. May also interact with homodimeric PDGFC. Monomer in the absence of bound ligand. Interaction with homodimeric PDGFB, heterodimers formed by PDGFA and PDGFB or homodimeric PDGFD, leads to receptor dimerization, where both PDGFRA homodimers and heterodimers with PDGFRB are observed. Interacts with SH2B2/APS. Interacts directly (tyrosine phosphorylated) with SHB. Interacts (tyrosine phosphorylated) with PIK3R1 and RASA1. Interacts (tyrosine phosphorylated) with CBL. Interacts (tyrosine phosphorylated) with SRC and SRC family kinases. Interacts (tyrosine phosphorylated) with PIK3C2B, maybe indirectly. Interacts (tyrosine phosphorylated) with SHC1, GRB7, GRB10 and NCK1. Interaction with GRB2 is mediated by SHC1. Interacts (via C-terminus) with NHERF1. Autophosphorylated on tyrosine residues upon ligand binding. Autophosphorylation occurs in trans, i.e. one subunit of the dimeric receptor phosphorylates tyrosine residues on the other subunit. Phosphorylation at Tyr-578, and to a lesser degree, Tyr-580 is important for interaction with SRC. Phosphorylation at Tyr-715 is important for interaction with GRB2. Phosphorylation at Tyr-739 and Tyr-750 is important for interaction with PIK3R1. Phosphorylation at Tyr-750 is important for interaction with NCK1. Phosphorylation at Tyr-770 and Tyr-856 is important for interaction with RASA1/GAP. Phosphorylation at Tyr-856 is important for efficient phosphorylation of PLCG1 and PTPN11, resulting in increased phosphorylation of AKT1, MAPK1/ERK2 and/or MAPK3/ERK1, PDCD6IP/ALIX and STAM, and in increased cell proliferation. Phosphorylation at Tyr-1008 is important for interaction with PTPN11. Phosphorylation at Tyr-1008 and Tyr-1020 is important for interaction with PLCG1. Dephosphorylated by PTPRJ at Tyr-750, Tyr-856, Tyr-1008 and Tyr-1020. Dephosphorylated by PTPN2 at Tyr-578 and Tyr-1020. Post-translationally, N-glycosylated. In terms of processing, ubiquitinated. After autophosphorylation, the receptor is polyubiquitinated, leading to its degradation. Weakly expressed in glomerular mesangial cells and interstitial cells. Up-regulated in areas of renal fibrosis. In mice with unilateral ureteral obstruction, increased expression in interstitial cells at day 4 and expression is markedly elevated at day 7 and is maximal at day 14.

The protein resides in the cell membrane. Its subcellular location is the cytoplasmic vesicle. The protein localises to the lysosome lumen. The catalysed reaction is L-tyrosyl-[protein] + ATP = O-phospho-L-tyrosyl-[protein] + ADP + H(+). With respect to regulation, present in an inactive conformation in the absence of bound ligand. Binding of PDGFB and/or PDGFD leads to dimerization and activation by autophosphorylation on tyrosine residues. Tyrosine-protein kinase that acts as a cell-surface receptor for homodimeric PDGFB and PDGFD and for heterodimers formed by PDGFA and PDGFB, and plays an essential role in the regulation of embryonic development, cell proliferation, survival, differentiation, chemotaxis and migration. Plays an essential role in blood vessel development by promoting proliferation, migration and recruitment of pericytes and smooth muscle cells to endothelial cells. Plays a role in the migration of vascular smooth muscle cells and the formation of neointima at vascular injury sites. Required for normal development of the cardiovascular system. Required for normal recruitment of pericytes (mesangial cells) in the kidney glomerulus, and for normal formation of a branched network of capillaries in kidney glomeruli. Promotes rearrangement of the actin cytoskeleton and the formation of membrane ruffles. Binding of its cognate ligands - homodimeric PDGFB, heterodimers formed by PDGFA and PDGFB or homodimeric PDGFD -leads to the activation of several signaling cascades; the response depends on the nature of the bound ligand and is modulated by the formation of heterodimers between PDGFRA and PDGFRB. Phosphorylates PLCG1, PIK3R1, PTPN11, RASA1/GAP, CBL, SHC1 and NCK1. Activation of PLCG1 leads to the production of the cellular signaling molecules diacylglycerol and inositol 1,4,5-trisphosphate, mobilization of cytosolic Ca(2+) and the activation of protein kinase C. Phosphorylation of PIK3R1, the regulatory subunit of phosphatidylinositol 3-kinase, leads to the activation of the AKT1 signaling pathway. Phosphorylation of SHC1, or of the C-terminus of PTPN11, creates a binding site for GRB2, resulting in the activation of HRAS, RAF1 and down-stream MAP kinases, including MAPK1/ERK2 and/or MAPK3/ERK1. Promotes phosphorylation and activation of SRC family kinases. Promotes phosphorylation of PDCD6IP/ALIX and STAM. Receptor signaling is down-regulated by protein phosphatases that dephosphorylate the receptor and its down-stream effectors, and by rapid internalization of the activated receptor. The protein is Platelet-derived growth factor receptor beta (Pdgfrb) of Mus musculus (Mouse).